Reading from the N-terminus, the 716-residue chain is Amino-acid acetyltransferase, mitochondrial (716 aa).

The N-terminal 44 residues, 1–44 (MSLHTGWPRTVNSSFLKKHRSSLCTCQHTSSVLPRSFSTTPDRH), are a transit peptide targeting the mitochondrion. Over residues 37 to 56 (FSTTPDRHVQQSADFSSTSR) the composition is skewed to polar residues. 2 disordered regions span residues 37–58 (FSTT…SRSY) and 96–121 (KAQH…TLPS). Residues 101–112 (KSPDANKPEPEK) show a composition bias toward basic and acidic residues. Positions 537–706 (SRPRLKLDDP…YEAVCRSIQP (170 aa)) constitute an N-acetyltransferase domain.

It belongs to the acetyltransferase family.

The protein localises to the mitochondrion. It catalyses the reaction L-glutamate + acetyl-CoA = N-acetyl-L-glutamate + CoA + H(+). The protein operates within amino-acid biosynthesis; L-arginine biosynthesis; N(2)-acetyl-L-ornithine from L-glutamate: step 1/4. Functionally, N-acetylglutamate synthase involved in arginine biosynthesis. The chain is Amino-acid acetyltransferase, mitochondrial (arg2) from Aspergillus fumigatus (strain CBS 144.89 / FGSC A1163 / CEA10) (Neosartorya fumigata).